The primary structure comprises 32 residues: TPSQCTAAQANKCCTGLTNGILNLNVLPALNP.

This Aspergillus flavus protein is Allergen Asp fl 1.